We begin with the raw amino-acid sequence, 378 residues long: Queuine tRNA-ribosyltransferase (378 aa).

The active-site Proton acceptor is D89. Substrate-binding positions include 89–93 (DSGGF), D143, Q194, and G221. Residues 252 to 258 (GVGTPAN) form an RNA binding region. Catalysis depends on D271, which acts as the Nucleophile. Zn(2+) is bound by residues C309, C311, C314, and H340.

Belongs to the queuine tRNA-ribosyltransferase family. Homodimer. Within each dimer, one monomer is responsible for RNA recognition and catalysis, while the other monomer binds to the replacement base PreQ1. Requires Zn(2+) as cofactor.

It catalyses the reaction 7-aminomethyl-7-carbaguanine + guanosine(34) in tRNA = 7-aminomethyl-7-carbaguanosine(34) in tRNA + guanine. It functions in the pathway tRNA modification; tRNA-queuosine biosynthesis. In terms of biological role, catalyzes the base-exchange of a guanine (G) residue with the queuine precursor 7-aminomethyl-7-deazaguanine (PreQ1) at position 34 (anticodon wobble position) in tRNAs with GU(N) anticodons (tRNA-Asp, -Asn, -His and -Tyr). Catalysis occurs through a double-displacement mechanism. The nucleophile active site attacks the C1' of nucleotide 34 to detach the guanine base from the RNA, forming a covalent enzyme-RNA intermediate. The proton acceptor active site deprotonates the incoming PreQ1, allowing a nucleophilic attack on the C1' of the ribose to form the product. After dissociation, two additional enzymatic reactions on the tRNA convert PreQ1 to queuine (Q), resulting in the hypermodified nucleoside queuosine (7-(((4,5-cis-dihydroxy-2-cyclopenten-1-yl)amino)methyl)-7-deazaguanosine). The sequence is that of Queuine tRNA-ribosyltransferase from Lachnospira eligens (strain ATCC 27750 / DSM 3376 / VPI C15-48 / C15-B4) (Eubacterium eligens).